The chain runs to 668 residues: Nuclear pore complex protein Nup75 (668 aa).

It belongs to the nucleoporin Nup85 family. As to quaternary structure, component of the nuclear pore complex (NPC). Component of the NPC Nup107-160 subcomplex.

The protein resides in the nucleus. Its subcellular location is the nuclear pore complex. It localises to the nucleus membrane. In terms of biological role, component of the nuclear pore complex (NPC) that seems to be required for NPC assembly and maintenance. Required for nuclear import of phosphorylated Mad via importin msk. Has no role in classical nuclear localization signal (cNLS)-dependent nuclear import via importin-beta. Facilitates the interaction between Nup93 and sec13 with msk. This Drosophila melanogaster (Fruit fly) protein is Nuclear pore complex protein Nup75.